The primary structure comprises 133 residues: Small ribosomal subunit protein uS8c (133 aa).

This sequence belongs to the universal ribosomal protein uS8 family. Part of the 30S ribosomal subunit.

It is found in the plastid. Its subcellular location is the chloroplast. One of the primary rRNA binding proteins, it binds directly to 16S rRNA central domain where it helps coordinate assembly of the platform of the 30S subunit. The chain is Small ribosomal subunit protein uS8c (rps8) from Pyropia yezoensis (Susabi-nori).